The following is a 134-amino-acid chain: NADH-quinone oxidoreductase subunit A (134 aa).

The next 3 helical transmembrane spans lie at 12–32 (FAIY…LAAL), 64–84 (FYLV…LFAW), and 93–113 (WVGF…LVYL).

This sequence belongs to the complex I subunit 3 family. NDH-1 is composed of 13 different subunits. Subunits NuoA, H, J, K, L, M, N constitute the membrane sector of the complex.

The protein localises to the cell inner membrane. It carries out the reaction a quinone + NADH + 5 H(+)(in) = a quinol + NAD(+) + 4 H(+)(out). Its function is as follows. NDH-1 shuttles electrons from NADH, via FMN and iron-sulfur (Fe-S) centers, to quinones in the respiratory chain. The immediate electron acceptor for the enzyme in this species is believed to be ubiquinone. Couples the redox reaction to proton translocation (for every two electrons transferred, four hydrogen ions are translocated across the cytoplasmic membrane), and thus conserves the redox energy in a proton gradient. The polypeptide is NADH-quinone oxidoreductase subunit A (Shewanella oneidensis (strain ATCC 700550 / JCM 31522 / CIP 106686 / LMG 19005 / NCIMB 14063 / MR-1)).